Consider the following 336-residue polypeptide: MPLPTRKIGQSLVSEIGFGSMGIARLGPSGFYGVVESDDERFKVLDAAHAAGCTFWDSAHLYGDSEELIGKWLKRTGKRNDIFLATKFGITPQGVRGDPDFVKEQCATSLERLGVDCIDLFYQHRVDPKTPIEITVGAMAELVKEGKVKYLGLSECSAKALRRAHAVHPIAALQIEYSPFVLDIEDPKIALLETARELGVTIVAYSPLGRGLLTGQYKSPDDFEPNDFRRTIPKFSADNFPKILDVVAQLKKIGEKHNATPGQVTLAWILAQGPEFIVIPGTKKIKYLEENVGAASIKLTEEEVAAVRKLAEESEIPGDRNARMGAMLIDSPELPQ.

Asp57 provides a ligand contact to NADP(+). The active-site Proton donor is the Tyr62. His124 contributes to the substrate binding site. Residues 154 to 155 (SE), Gln174, 206 to 220 (SPLG…YKSP), and 283 to 291 (KKIKYLEEN) each bind NADP(+).

It belongs to the aldo/keto reductase family. Aldo/keto reductase 2 subfamily.

It participates in mycotoxin biosynthesis. Aldo-keto reductase; part of the gene cluster that mediates the biosynthesis of strobilurin A, an antifungal polyketide that contains a key beta-methoxyacrylate toxophore that targets the complex III of the mitochondrial electron transport chain. Strobilurin biosynthesis begins with construction of benzoyl CoA by step-wise elimination of ammonia from phenylalanine by the phenylalanine ammonia-lyase str11, oxygenation by str8 and retro-Claisen reaction to form benzoic acid, which is activated to its CoA thiolester benzoyl CoA by the dedicated CoA ligase str10. Benzoyl CoA forms the starter unit for the highly reducing polyketide synthase stpks1 that produces the polyketide prestrobilutin A. The FAD-dependent oxygenase str9 then catalyzes the key oxidative rearrangement responsible for the creation of the beta-methoxyacrylate toxophore. Str9 performs epoxidation of the 2,3 olefin of prestrobilutin A, followed by Meinwald rearrangement to furnish the aldehyde intermediate. Rapid enolization of the aldehyde intermediate would give the beta-methoxyacrylate skeleton and methylations catalyzed by str2 and str3 complete the synthesis and lead to the production of strobilurin A. The short-chain dehydrogenase stl2 and the dehydrogenase str4 play a role in the shunt pathway leading to the production of bolineol. The cluster encodes no obvious halogenase gene that could be involved in production of strobilurin B, nor any obvious dimethylallyl-transferase that could be involved in the production of strobilurin G. It is possible that unknown proteins encoded in, or near, the cluster (such as str1 or stl1) may form new classes of halogenases or dimethylally-transferases, or that the responsible genes are located elsewhere on the genome. Similarly, proteins encoded by str5/str6 hydrolases appear to have no chemical role in the biosynthesis of strobilurin A. Finally, no obvious self-resistance gene is found within the cluster. The chain is Aldo-keto reductase str7 from Strobilurus tenacellus.